We begin with the raw amino-acid sequence, 157 residues long: 1,4-dihydroxy-2-naphthoyl-CoA thioesterase 2 (157 aa).

E56 is an active-site residue. Residues 154 to 156 (ISK) carry the Microbody targeting signal motif.

The protein belongs to the 4-hydroxybenzoyl-CoA thioesterase family. DHNA-CoA hydrolase subfamily. In terms of assembly, homotetramers.

It localises to the peroxisome. Its pathway is cofactor biosynthesis; phylloquinone biosynthesis. The protein operates within quinol/quinone metabolism; 1,4-dihydroxy-2-naphthoate biosynthesis; 1,4-dihydroxy-2-naphthoate from chorismate: step 7/7. Catalyzes the hydrolysis of the thioester bond of 1,4-dihydroxy-2-naphthoyl-CoA (DHNA-CoA) in peroxisomes, a necessary step to form the naphthoquinone ring of phylloquinone (vitamin K(1)). Displayed also slight thioesterase activity towards benzoyl-CoA. Is not active on phenylacetyl-CoA, succinyl-CoA and palmitoyl-CoA thioesters. This Arabidopsis thaliana (Mouse-ear cress) protein is 1,4-dihydroxy-2-naphthoyl-CoA thioesterase 2.